The sequence spans 327 residues: Interleukin-12 subunit beta (327 aa).

The N-terminal stretch at 1-22 (MCLQQLVISWVSLVWLASPLLA) is a signal peptide. The Ig-like C2-type domain occupies 23–106 (IWELEKNVYV…LSQMLLLLHK (84 aa)). A disulfide bridge links Cys-50 with Cys-90. N-linked (GlcNAc...) asparagine glycans are attached at residues Asn-134 and Asn-152. Residues 237–327 (PPKNLKMKPS…WSEWATMSCP (91 aa)) enclose the Fibronectin type-III domain.

Belongs to the IL-12B family. In terms of assembly, heterodimer with IL12A; disulfide-linked. The heterodimer is known as interleukin IL-12. Heterodimer with IL23A; disulfide-linked. The heterodimer is known as interleukin IL-23. Also secreted as a monomer. Interacts with NBR1; this interaction promotes IL-12 secretion.

It is found in the secreted. Its function is as follows. Cytokine that can act as a growth factor for activated T and NK cells, enhance the lytic activity of NK/lymphokine-activated killer cells, and stimulate the production of IFN-gamma by resting PBMC. Associates with IL23A to form the IL-23 interleukin, a heterodimeric cytokine which functions in innate and adaptive immunity. IL-23 may constitute with IL-17 an acute response to infection in peripheral tissues. IL-23 binds to a heterodimeric receptor complex composed of IL12RB1 and IL23R, activates the Jak-Stat signaling cascade, stimulates memory rather than naive T-cells and promotes production of pro-inflammatory cytokines. IL-23 induces autoimmune inflammation and thus may be responsible for autoimmune inflammatory diseases and may be important for tumorigenesis. This chain is Interleukin-12 subunit beta (IL12B), found in Marmota monax (Woodchuck).